Reading from the N-terminus, the 493-residue chain is Inosine-5'-monophosphate dehydrogenase (493 aa).

CBS domains follow at residues 97–155 and 159–219; these read VIID…NAPI and MTSE…AKDE. NAD(+) is bound by residues Asp-253 and 303–305; that span reads GIG. Residues Gly-305 and Gly-307 each coordinate K(+). Residue Ser-308 participates in IMP binding. Cys-310 serves as a coordination point for K(+). Cys-310 (thioimidate intermediate) is an active-site residue. Residues 343–345, 366–367, and 390–394 contribute to the IMP site; these read DGG, GS, and YRGMG. Arg-406 acts as the Proton acceptor in catalysis. Glu-421 provides a ligand contact to IMP. 3 residues coordinate K(+): Glu-475, Ser-476, and His-477.

It belongs to the IMPDH/GMPR family. Homotetramer. Requires K(+) as cofactor.

The catalysed reaction is IMP + NAD(+) + H2O = XMP + NADH + H(+). The protein operates within purine metabolism; XMP biosynthesis via de novo pathway; XMP from IMP: step 1/1. With respect to regulation, mycophenolic acid (MPA) is a non-competitive inhibitor that prevents formation of the closed enzyme conformation by binding to the same site as the amobile flap. In contrast, mizoribine monophosphate (MZP) is a competitive inhibitor that induces the closed conformation. MPA is a potent inhibitor of mammalian IMPDHs but a poor inhibitor of the bacterial enzymes. MZP is a more potent inhibitor of bacterial IMPDH. Functionally, catalyzes the conversion of inosine 5'-phosphate (IMP) to xanthosine 5'-phosphate (XMP), the first committed and rate-limiting step in the de novo synthesis of guanine nucleotides, and therefore plays an important role in the regulation of cell growth. This is Inosine-5'-monophosphate dehydrogenase from Streptococcus pyogenes serotype M1.